Consider the following 212-residue polypeptide: Nuclear phosphoprotein UL3 homolog (212 aa).

Belongs to the alphaherpesvirinae HHV-1 UL3 family. Post-translationally, phosphorylated.

The protein localises to the host nucleus. The chain is Nuclear phosphoprotein UL3 homolog from Equus caballus (Horse).